The sequence spans 915 residues: Probable LRR receptor-like serine/threonine-protein kinase At2g16250 (915 aa).

The N-terminal stretch at 1–28 is a signal peptide; sequence MVDQRRSALGFVLLLLCLVLFFDCVVVG. Residues 29 to 451 lie on the Extracellular side of the membrane; it reads QTQSRFSEKL…ISRRTVIILA (423 aa). N-linked (GlcNAc...) asparagine glycosylation is found at asparagine 71, asparagine 78, asparagine 101, asparagine 109, asparagine 150, asparagine 158, and asparagine 177. LRR repeat units lie at residues 102-125, 127-150, 151-174, 176-198, 199-223, 225-247, 248-271, 272-295, 297-320, 321-344, and 366-390; these read LTRLSYFNASGLALPGTIPEWFGV, LLALEVLDLSSCSVNGVVPFTLGN, LTSLRTLNLSQNSLTSLVPSSLGQ, LNLSQLDLSRNSFTGVLPQSFSS, LKNLLTLDVSSNYLTGPIPPGLGAL, KLIHLNFSSNSFSSPIPSELGDL, VNLVDFDLSINSLSGSVPQELRKL, SKLQLMAIGDNLLSGTLPVDLFSA, SQLQTLVLRENGFSGSLPDVCWSL, PKLRILDIAKNNFTGLLPYSSYDS, and LRRFRIMDLSGNYFEGKLPDYVTGE. N-linked (GlcNAc...) asparagine glycosylation is present at asparagine 230. N-linked (GlcNAc...) asparagine glycosylation occurs at asparagine 332. Asparagine 391, asparagine 429, and asparagine 437 each carry an N-linked (GlcNAc...) asparagine glycan. The chain crosses the membrane as a helical span at residues 452-472; sequence AVGGGVAFILLFVILPIILVL. The Cytoplasmic segment spans residues 473–915; the sequence is CMRHRRRAAQ…AAYGVVEDNL (443 aa). Residues 482–503 form a disordered region; that stretch reads QRGNNDRPKPAGEASQQPPKGA. The Protein kinase domain occupies 527-811; the sequence is FNDANLIKRG…IVNALENPLK (285 aa). Residues 533–541 and lysine 555 each bind ATP; that span reads IKRGHSGNL. The active-site Proton acceptor is the aspartate 657. Residues 851–915 form a disordered region; it reads TAVQAGATTS…AAYGVVEDNL (65 aa). A compositionally biased stretch (gly residues) spans 859-870; the sequence is TSGGGGGGGGNG. Residues 871 to 892 are compositionally biased toward low complexity; it reads LRNSGSQGSSGRNNNNNGNSSS.

The protein belongs to the protein kinase superfamily. Ser/Thr protein kinase family.

Its subcellular location is the membrane. It carries out the reaction L-seryl-[protein] + ATP = O-phospho-L-seryl-[protein] + ADP + H(+). The catalysed reaction is L-threonyl-[protein] + ATP = O-phospho-L-threonyl-[protein] + ADP + H(+). This chain is Probable LRR receptor-like serine/threonine-protein kinase At2g16250, found in Arabidopsis thaliana (Mouse-ear cress).